We begin with the raw amino-acid sequence, 385 residues long: 5'-AMP-activated protein kinase catalytic subunit alpha-1 (385 aa).

The Protein kinase domain maps to 1 to 229 (DGRVKIGHYI…IKDIREHEWF (229 aa)). Thr14 carries the post-translational modification Phosphothreonine. 15–22 (LGVGTFGK) contacts ATP. The Proton acceptor role is filled by Asp100. Position 133 is a phosphothreonine; by LKB1 and CaMKK2 (Thr133). Thr219 and Thr276 each carry phosphothreonine. Positions 252-297 (EALKQDPLAVAYHLIIDNRDFYLATSPPDSFLDDHHLTRVPFLVAE) are AIS. Ser277 carries the phosphoserine modification. Ser281 carries the post-translational modification Phosphoserine; by ULK1. Thr289 carries the post-translational modification Phosphothreonine; by ULK1. Thr298 carries the phosphothreonine modification. A phosphoserine mark is found at Ser353 and Ser383.

It belongs to the protein kinase superfamily. CAMK Ser/Thr protein kinase family. SNF1 subfamily. AMPK is a heterotrimer of an alpha catalytic subunit (PRKAA1 or PRKAA2), a beta (PRKAB1 or PRKAB2) and a gamma non-catalytic subunits (PRKAG1, PRKAG2 or PRKAG3). Interacts with FNIP1 and FNIP2. Requires Mg(2+) as cofactor. Ubiquitinated. Post-translationally, phosphorylated at Thr-133 by STK11/LKB1 in complex with STE20-related adapter-alpha (STRADA) pseudo kinase and CAB39. Also phosphorylated at Thr-133 by CAMKK2; triggered by a rise in intracellular calcium ions, without detectable changes in the AMP/ATP ratio. CAMKK1 can also phosphorylate Thr-133, but at a much lower level. Dephosphorylated by protein phosphatase 2A and 2C (PP2A and PP2C). Phosphorylated by ULK1 and ULK2; leading to negatively regulate AMPK activity and suggesting the existence of a regulatory feedback loop between ULK1, ULK2 and AMPK. Dephosphorylated by PPM1A and PPM1B. In terms of processing, glycosylated; O-GlcNAcylated by OGT, promoting the AMP-activated protein kinase (AMPK) activity.

The protein resides in the cytoplasm. Its subcellular location is the nucleus. It catalyses the reaction L-seryl-[protein] + ATP = O-phospho-L-seryl-[protein] + ADP + H(+). The enzyme catalyses L-threonyl-[protein] + ATP = O-phospho-L-threonyl-[protein] + ADP + H(+). It carries out the reaction L-seryl-[acetyl-CoA carboxylase] + ATP = O-phospho-L-seryl-[acetyl-CoA carboxylase] + ADP + H(+). The catalysed reaction is L-seryl-[3-hydroxy-3-methylglutaryl-coenzyme A reductase] + ATP = O-phospho-L-seryl-[3-hydroxy-3-methylglutaryl-coenzyme A reductase] + ADP + H(+). It catalyses the reaction L-seryl-[tau protein] + ATP = O-phospho-L-seryl-[tau protein] + ADP + H(+). The enzyme catalyses L-threonyl-[tau protein] + ATP = O-phospho-L-threonyl-[tau protein] + ADP + H(+). With respect to regulation, activated by phosphorylation on Thr-133. Binding of AMP to non-catalytic gamma subunit (PRKAG1, PRKAG2 or PRKAG3) results in allosteric activation, inducing phosphorylation on Thr-133. AMP-binding to gamma subunit also sustains activity by preventing dephosphorylation of Thr-133. ADP also stimulates Thr-133 phosphorylation, without stimulating already phosphorylated AMPK. ATP promotes dephosphorylation of Thr-133, rendering the enzyme inactive. Under physiological conditions AMPK mainly exists in its inactive form in complex with ATP, which is much more abundant than AMP. Selectively inhibited by compound C (6-[4-(2-Piperidin-1-yl-ethoxy)-phenyl)]-3-pyridin-4-yl-pyyrazolo[1,5-a] pyrimidine. Activated by resveratrol, a natural polyphenol present in red wine, and S17834, a synthetic polyphenol. In terms of biological role, catalytic subunit of AMP-activated protein kinase (AMPK), an energy sensor protein kinase that plays a key role in regulating cellular energy metabolism. In response to reduction of intracellular ATP levels, AMPK activates energy-producing pathways and inhibits energy-consuming processes: inhibits protein, carbohydrate and lipid biosynthesis, as well as cell growth and proliferation. AMPK acts via direct phosphorylation of metabolic enzymes, and by longer-term effects via phosphorylation of transcription regulators. Regulates lipid synthesis by phosphorylating and inactivating lipid metabolic enzymes such as ACACA, ACACB, GYS1, HMGCR and LIPE; regulates fatty acid and cholesterol synthesis by phosphorylating acetyl-CoA carboxylase (ACACA and ACACB) and hormone-sensitive lipase (LIPE) enzymes, respectively. Promotes lipolysis of lipid droplets by mediating phosphorylation of isoform 1 of CHKA (CHKalpha2). Regulates insulin-signaling and glycolysis by phosphorylating IRS1, PFKFB2 and PFKFB3. AMPK stimulates glucose uptake in muscle by increasing the translocation of the glucose transporter SLC2A4/GLUT4 to the plasma membrane, possibly by mediating phosphorylation of TBC1D4/AS160. Regulates transcription and chromatin structure by phosphorylating transcription regulators involved in energy metabolism such as CRTC2/TORC2, FOXO3, histone H2B, HDAC5, MEF2C, MLXIPL/ChREBP, EP300, HNF4A, p53/TP53, SREBF1, SREBF2 and PPARGC1A. Acts as a key regulator of glucose homeostasis in liver by phosphorylating CRTC2/TORC2, leading to CRTC2/TORC2 sequestration in the cytoplasm. In response to stress, phosphorylates 'Ser-36' of histone H2B (H2BS36ph), leading to promote transcription. Acts as a key regulator of cell growth and proliferation by phosphorylating FNIP1, TSC2, RPTOR, WDR24 and ATG1/ULK1: in response to nutrient limitation, negatively regulates the mTORC1 complex by phosphorylating RPTOR component of the mTORC1 complex and by phosphorylating and activating TSC2. Also phosphorylates and inhibits GATOR2 subunit WDR24 in response to nutrient limitation, leading to suppress glucose-mediated mTORC1 activation. In response to energetic stress, phosphorylates FNIP1, inactivating the non-canonical mTORC1 signaling, thereby promoting nuclear translocation of TFEB and TFE3, and inducing transcription of lysosomal or autophagy genes. In response to nutrient limitation, promotes autophagy by phosphorylating and activating ATG1/ULK1. In that process also activates WDR45/WIPI4. Phosphorylates CASP6, thereby preventing its autoprocessing and subsequent activation. In response to nutrient limitation, phosphorylates transcription factor FOXO3 promoting FOXO3 mitochondrial import. Also acts as a regulator of cellular polarity by remodeling the actin cytoskeleton; probably by indirectly activating myosin. AMPK also acts as a regulator of circadian rhythm by mediating phosphorylation of CRY1, leading to destabilize it. May regulate the Wnt signaling pathway by phosphorylating CTNNB1, leading to stabilize it. Also has tau-protein kinase activity: in response to amyloid beta A4 protein (APP) exposure, activated by CAMKK2, leading to phosphorylation of MAPT/TAU; however the relevance of such data remains unclear in vivo. Also phosphorylates CFTR, EEF2K, KLC1, NOS3 and SLC12A1. Regulates hepatic lipogenesis. Activated via SIRT3, represses sterol regulatory element-binding protein (SREBP) transcriptional activities and ATP-consuming lipogenesis to restore cellular energy balance. Upon stress, regulates mitochondrial fragmentation through phosphorylation of MTFR1L. The protein is 5'-AMP-activated protein kinase catalytic subunit alpha-1 (PRKAA1) of Sus scrofa (Pig).